The chain runs to 383 residues: Trichodiene synthase (383 aa).

The protein belongs to the trichodiene synthase family.

It catalyses the reaction (2E,6E)-farnesyl diphosphate = trichodiene + diphosphate. It functions in the pathway sesquiterpene biosynthesis; trichothecene biosynthesis. Functionally, TS is a member of the terpene cyclase group of enzymes. It catalyzes the isomerization and cyclization of farnesyl pyro-phosphate to form trichodiene, the first cyclic intermediate in the biosynthetic pathway for trichothecenes. It serves to branch trichothecene biosynthesis from the isoprenoid pathway. This chain is Trichodiene synthase (TRI5), found in Stachybotrys chartarum (Toxic black mold).